The primary structure comprises 274 residues: Urease accessory protein UreD (274 aa).

Belongs to the UreD family. As to quaternary structure, ureD, UreF and UreG form a complex that acts as a GTP-hydrolysis-dependent molecular chaperone, activating the urease apoprotein by helping to assemble the nickel containing metallocenter of UreC. The UreE protein probably delivers the nickel.

It is found in the cytoplasm. In terms of biological role, required for maturation of urease via the functional incorporation of the urease nickel metallocenter. The sequence is that of Urease accessory protein UreD from Lachnoclostridium phytofermentans (strain ATCC 700394 / DSM 18823 / ISDg) (Clostridium phytofermentans).